Reading from the N-terminus, the 247-residue chain is uncharacterized protein (247 aa).

A run of 3 helical transmembrane segments spans residues 108 to 128 (WYINFIPMFVYGCLDEAFLII), 136 to 156 (IFSVYNGMSMLASAAVANIIC), and 194 to 214 (GAKLSGLWMGLTLGMLPLFFI).

It is found in the membrane. This is an uncharacterized protein from Caenorhabditis elegans.